The primary structure comprises 584 residues: Arginine--tRNA ligase (584 aa).

Positions 126–136 match the 'HIGH' region motif; it reads PNIAKEMHVGH.

The protein belongs to the class-I aminoacyl-tRNA synthetase family. In terms of assembly, monomer.

The protein localises to the cytoplasm. It catalyses the reaction tRNA(Arg) + L-arginine + ATP = L-arginyl-tRNA(Arg) + AMP + diphosphate. This chain is Arginine--tRNA ligase (argS), found in Synechocystis sp. (strain ATCC 27184 / PCC 6803 / Kazusa).